The sequence spans 161 residues: Small ribosomal subunit protein uS9 (161 aa).

The segment covering methionine 1–glutamate 21 has biased composition (polar residues). Residues methionine 1–proline 25 are disordered.

Belongs to the universal ribosomal protein uS9 family.

The chain is Small ribosomal subunit protein uS9 from Methylorubrum extorquens (strain CM4 / NCIMB 13688) (Methylobacterium extorquens).